A 350-amino-acid chain; its full sequence is Renin receptor (350 aa).

The N-terminal stretch at Met1–Gly17 is a signal peptide. Over Asn18–Glu302 the chain is Extracellular. The helical transmembrane segment at Tyr303–Ile323 threads the bilayer. Residues Thr324 to Asp350 are Cytoplasmic-facing. The short motif at Lys346–Asp350 is the Mediates retrograde transport to the ER element.

As to quaternary structure, interacts with renin. Accessory component of the multisubunit proton-transporting vacuolar (V)-ATPase protein pump. Interacts (via N-terminus) with ATP6AP1 (via N-terminus). Interacts with ATP6V0D1; ATP6V0D1 is a V-ATPase complex subunit and the interaction promotes V-ATPase complex assembly. Interacts with TMEM9; TMEM9 is a V-ATPase assembly regulator and the interaction induces the interaction with ATP6V0D1. Interacts with VMA21 (via N-terminus); VMA21 is a V-ATPase accessory component. Post-translationally, phosphorylated. In terms of processing, proteolytically cleaved by a furin-like convertase in the trans-Golgi network to generate N- and C-terminal fragments. Expressed in glutamatergic and GABAergic neurons with highest levels in the cortex, the hippocampus, the medial habenular nucleus, the cerebellum, the medulla and the olfactory bulb (at protein level).

It localises to the endoplasmic reticulum membrane. The protein localises to the lysosome membrane. It is found in the cytoplasmic vesicle. The protein resides in the autophagosome membrane. Its subcellular location is the cell projection. It localises to the dendritic spine membrane. The protein localises to the axon. It is found in the endosome membrane. The protein resides in the clathrin-coated vesicle membrane. Its subcellular location is the secretory vesicle. It localises to the synaptic vesicle membrane. Its function is as follows. Multifunctional protein which functions as a renin, prorenin cellular receptor and is involved in the assembly of the lysosomal proton-transporting V-type ATPase (V-ATPase) and the acidification of the endo-lysosomal system. May mediate renin-dependent cellular responses by activating ERK1 and ERK2. By increasing the catalytic efficiency of renin in AGT/angiotensinogen conversion to angiotensin I, may also play a role in the renin-angiotensin system (RAS). Through its function in V-type ATPase (v-ATPase) assembly and acidification of the lysosome it regulates protein degradation and may control different signaling pathways important for proper brain development, synapse morphology and synaptic transmission. The sequence is that of Renin receptor from Mus musculus (Mouse).